Here is a 594-residue protein sequence, read N- to C-terminus: ATP-dependent zinc metalloprotease FtsH 1 (594 aa).

The Cytoplasmic segment spans residues 1–2 (MR). A helical membrane pass occupies residues 3 to 23 (WWAGAALLLAALLFGRPAAAM). Topologically, residues 24-92 (EAQPVAYSEF…RVEFVRPADP (69 aa)) are extracellular. A helical transmembrane segment spans residues 93 to 113 (IAFRTLLRFIPPLLILGAILW). At 114-594 (FTRRTAGGSG…ANSRGDEGNQ (481 aa)) the chain is on the cytoplasmic side. Residue 186–193 (GPPGTGKT) coordinates ATP. H408 contributes to the Zn(2+) binding site. E409 is an active-site residue. The Zn(2+) site is built by H412 and D485.

The protein in the central section; belongs to the AAA ATPase family. In the C-terminal section; belongs to the peptidase M41 family. As to quaternary structure, homohexamer. Zn(2+) is required as a cofactor.

It localises to the cell membrane. Acts as a processive, ATP-dependent zinc metallopeptidase for both cytoplasmic and membrane proteins. Plays a role in the quality control of integral membrane proteins. In Symbiobacterium thermophilum (strain DSM 24528 / JCM 14929 / IAM 14863 / T), this protein is ATP-dependent zinc metalloprotease FtsH 1.